A 156-amino-acid polypeptide reads, in one-letter code: Arginine repressor (156 aa).

The protein belongs to the ArgR family.

The protein resides in the cytoplasm. It functions in the pathway amino-acid biosynthesis; L-arginine biosynthesis [regulation]. Its function is as follows. Regulates arginine biosynthesis genes. This is Arginine repressor from Shewanella baltica (strain OS223).